Here is a 503-residue protein sequence, read N- to C-terminus: MSEQNHPQTEPQLDENQIIALRREKLNNIRQQRNAYPNDFKRDSFAADLQAQYGEIGKEELDPQAVPVKIAGRMMLKRQMGKASFATIQDVTGQIQLYLNNKGVSQEVLDDFNHWDLGDIVGAEGTLFKTNHGELTVRVSDIRLLSKSLRPLPDKHKGLSDQETKYRQRYVDLIANEESRNTFIKRSQIIQSVRNFMVGEHYLEVETPMMHPIPGGATAKPFVTHHNALDIPLYLRIAPELYLKRLVVGGLERVFEINRSFRNEGMSVRHNPEFTMIEFYEAFSDYERMMQMAEDIIRNASRTVNGTANITYNGKEVDLESPFERLTILEAIKKYNPHYTDEQLNDAEWLKKEIVKHGESLPPSPGIGSLQLALFEGCAEGKLWNPTFIVDYPVEVSPLARASDTKQGLTERFELFVVGRELANGYSELNDPEDQAERFKSQVAQKDAGDDEAMHYDADYIRAMEFGLPPTGGCGIGIDRLVMLLTDLQTIRDVILFPQMRPE.

Mg(2+)-binding residues include Glu414 and Glu421.

This sequence belongs to the class-II aminoacyl-tRNA synthetase family. As to quaternary structure, homodimer. Mg(2+) serves as cofactor.

It localises to the cytoplasm. The enzyme catalyses tRNA(Lys) + L-lysine + ATP = L-lysyl-tRNA(Lys) + AMP + diphosphate. The chain is Lysine--tRNA ligase from Neisseria gonorrhoeae (strain ATCC 700825 / FA 1090).